A 93-amino-acid polypeptide reads, in one-letter code: Small ribosomal subunit protein uS19 (93 aa).

It belongs to the universal ribosomal protein uS19 family.

Protein S19 forms a complex with S13 that binds strongly to the 16S ribosomal RNA. The sequence is that of Small ribosomal subunit protein uS19 from Mycolicibacterium paratuberculosis (strain ATCC BAA-968 / K-10) (Mycobacterium paratuberculosis).